Consider the following 521-residue polypeptide: Glutamate--cysteine ligase (521 aa).

It belongs to the glutamate--cysteine ligase type 1 family. Type 1 subfamily.

The enzyme catalyses L-cysteine + L-glutamate + ATP = gamma-L-glutamyl-L-cysteine + ADP + phosphate + H(+). It functions in the pathway sulfur metabolism; glutathione biosynthesis; glutathione from L-cysteine and L-glutamate: step 1/2. This Aliivibrio fischeri (strain MJ11) (Vibrio fischeri) protein is Glutamate--cysteine ligase.